The chain runs to 175 residues: Endoribonuclease YbeY (175 aa).

Residues H121, H125, and H131 each contribute to the Zn(2+) site. A disordered region spans residues 154–175 (PDPYSPAQQESQAQPENTELNP). Over residues 159–175 (PAQQESQAQPENTELNP) the composition is skewed to polar residues.

It belongs to the endoribonuclease YbeY family. Zn(2+) is required as a cofactor.

It localises to the cytoplasm. Functionally, single strand-specific metallo-endoribonuclease involved in late-stage 70S ribosome quality control and in maturation of the 3' terminus of the 16S rRNA. The protein is Endoribonuclease YbeY of Alcanivorax borkumensis (strain ATCC 700651 / DSM 11573 / NCIMB 13689 / SK2).